The chain runs to 187 residues: Ribosome maturation factor RimM (187 aa).

The PRC barrel domain maps to 91 to 183 (DDGFYDHELE…ILVLTPPEGL (93 aa)).

The protein belongs to the RimM family. As to quaternary structure, binds ribosomal protein uS19.

It is found in the cytoplasm. Its function is as follows. An accessory protein needed during the final step in the assembly of 30S ribosomal subunit, possibly for assembly of the head region. Essential for efficient processing of 16S rRNA. May be needed both before and after RbfA during the maturation of 16S rRNA. It has affinity for free ribosomal 30S subunits but not for 70S ribosomes. The chain is Ribosome maturation factor RimM from Corynebacterium jeikeium (strain K411).